We begin with the raw amino-acid sequence, 537 residues long: Glutamyl-tRNA reductase, chloroplastic (537 aa).

A chloroplast-targeting transit peptide spans 1–48 (MMASTTSATAAGGAFAAAKTRAGSSAAGGGACARVAAGGRRRSGVVVR). Residues 134-137 (TCNR), serine 194, 199-201 (EGQ), and glutamine 205 each bind substrate. Catalysis depends on cysteine 135, which acts as the Nucleophile. 276–281 (GAGKMG) provides a ligand contact to NADP(+).

Belongs to the glutamyl-tRNA reductase family.

Its subcellular location is the plastid. The protein localises to the chloroplast. The enzyme catalyses (S)-4-amino-5-oxopentanoate + tRNA(Glu) + NADP(+) = L-glutamyl-tRNA(Glu) + NADPH + H(+). It functions in the pathway porphyrin-containing compound metabolism; protoporphyrin-IX biosynthesis; 5-aminolevulinate from L-glutamyl-tRNA(Glu): step 1/2. Catalyzes the NADPH-dependent reduction of glutamyl-tRNA(Glu) to glutamate 1-semialdehyde (GSA). In Oryza sativa subsp. indica (Rice), this protein is Glutamyl-tRNA reductase, chloroplastic.